Reading from the N-terminus, the 426-residue chain is Glutamate-1-semialdehyde 2,1-aminomutase (426 aa).

The residue at position 265 (Lys265) is an N6-(pyridoxal phosphate)lysine.

Belongs to the class-III pyridoxal-phosphate-dependent aminotransferase family. HemL subfamily. In terms of assembly, homodimer. Pyridoxal 5'-phosphate is required as a cofactor.

Its subcellular location is the cytoplasm. The catalysed reaction is (S)-4-amino-5-oxopentanoate = 5-aminolevulinate. It participates in porphyrin-containing compound metabolism; protoporphyrin-IX biosynthesis; 5-aminolevulinate from L-glutamyl-tRNA(Glu): step 2/2. The sequence is that of Glutamate-1-semialdehyde 2,1-aminomutase from Escherichia coli O7:K1 (strain IAI39 / ExPEC).